The primary structure comprises 584 residues: Probable DNA ligase (584 aa).

ATP is bound at residue Glu-248. The active-site N6-AMP-lysine intermediate is the Lys-250. Positions 255, 270, 299, 339, 416, and 422 each coordinate ATP.

Belongs to the ATP-dependent DNA ligase family. Requires Mg(2+) as cofactor.

The catalysed reaction is ATP + (deoxyribonucleotide)n-3'-hydroxyl + 5'-phospho-(deoxyribonucleotide)m = (deoxyribonucleotide)n+m + AMP + diphosphate.. Its function is as follows. DNA ligase that seals nicks in double-stranded DNA during DNA replication, DNA recombination and DNA repair. The sequence is that of Probable DNA ligase from Aquifex aeolicus (strain VF5).